A 362-amino-acid chain; its full sequence is Biotin synthase (362 aa).

One can recognise a Radical SAM core domain in the interval Asn-46 to Arg-273. [4Fe-4S] cluster is bound by residues Cys-61, Cys-65, and Cys-68. [2Fe-2S] cluster contacts are provided by Cys-105, Cys-136, Cys-196, and Arg-268.

The protein belongs to the radical SAM superfamily. Biotin synthase family. As to quaternary structure, homodimer. Requires [4Fe-4S] cluster as cofactor. [2Fe-2S] cluster serves as cofactor.

The enzyme catalyses (4R,5S)-dethiobiotin + (sulfur carrier)-SH + 2 reduced [2Fe-2S]-[ferredoxin] + 2 S-adenosyl-L-methionine = (sulfur carrier)-H + biotin + 2 5'-deoxyadenosine + 2 L-methionine + 2 oxidized [2Fe-2S]-[ferredoxin]. It participates in cofactor biosynthesis; biotin biosynthesis; biotin from 7,8-diaminononanoate: step 2/2. Its function is as follows. Catalyzes the conversion of dethiobiotin (DTB) to biotin by the insertion of a sulfur atom into dethiobiotin via a radical-based mechanism. The sequence is that of Biotin synthase from Aeromonas salmonicida (strain A449).